Here is a 380-residue protein sequence, read N- to C-terminus: MIISSTTDFREAARRQLPRFLFDYIDGGAYAERTLARNVSDLADISLRQRVLKDVSRVSTRTTLFGVEQTLPVALAPVGLTGMYARRGEVQAARAAAAKGVPFCLSTVSVCDLAEVSRASSAPIWFQLYMLRDRGFMRDLLARAADAGATALVFTVDMPVPGARYRDAHSGMTGPNAAMRRLVQAVFKPGWAWDVGVMGRPHTLGNVAPVLGENTGLEDFMGWLGANFDPSIQWKDLDWIRDQWKGPLILKGVLDPEDAKAAADIGADGIVVSNHGGRQLDGVLSSARALPDIAEAVGDRLTVLADGGVRSGLDVVRMLALGAKGVLLGRAFVYALAARGGPGVSQLLDLIEKEMRVAMALTGVNTLDQIDRSILAKTDR.

An FMN hydroxy acid dehydrogenase domain is found at 1–380 (MIISSTTDFR…DRSILAKTDR (380 aa)). Tyr24 contributes to the substrate binding site. The FMN site is built by Ser106 and Gln127. Residue Tyr129 coordinates substrate. Thr155 lines the FMN pocket. Arg164 is a binding site for substrate. Position 251 (Lys251) interacts with FMN. The active-site Proton acceptor is the His275. Arg278 lines the substrate pocket. 306–330 (DGGVRSGLDVVRMLALGAKGVLLGR) is a binding site for FMN.

Belongs to the FMN-dependent alpha-hydroxy acid dehydrogenase family. Requires FMN as cofactor.

The protein localises to the cell inner membrane. It catalyses the reaction (S)-lactate + A = pyruvate + AH2. Functionally, catalyzes the conversion of L-lactate to pyruvate. Is coupled to the respiratory chain. This is L-lactate dehydrogenase from Caulobacter sp. (strain K31).